The following is a 195-amino-acid chain: MPKPTKGPRLGGSSSHQKALLANLATSLFEHGRIKTTEPKARALRPYAEKLITHAKKGELHNRREVMKKIRDKDVVHTLFAEIGPFFADREGGYTRIIKVEPRKGDNAPMAVIELVREKTVTSEANRARRVGASKQTAPVAAAAAPQAAVEPEATEGPDADDSSALPEAEDTTASEASRSTETDDPTQDSDADKS.

The interval Ala-125–Ser-195 is disordered. Residues Gln-136–Pro-152 are compositionally biased toward low complexity. Acidic residues-rich tracts occupy residues Glu-153–Thr-173 and Thr-183–Ser-195.

The protein belongs to the bacterial ribosomal protein bL17 family. Part of the 50S ribosomal subunit. Contacts protein L32.

This chain is Large ribosomal subunit protein bL17, found in Mycobacterium sp. (strain JLS).